A 210-amino-acid chain; its full sequence is CASP-like protein 3A1 (210 aa).

The Cytoplasmic portion of the chain corresponds to 1 to 44 (MNGLKTPPEIGIQLPEAKVAAETGTMSGPLVPPRSDRSVRRGTD). The chain crosses the membrane as a helical span at residues 45 to 65 (VAHVVLRFVCLLTSVIALSLM). The Extracellular portion of the chain corresponds to 66 to 94 (ATAKEAASISIYGFLLPVSSKWSFSDSFE). Residues 95–115 (YLVGVSAAVAAHALLQLIISV) form a helical membrane-spanning segment. Residues 116–130 (SRLLRKSPVIPSRNH) are Cytoplasmic-facing. Residues 131–151 (AWLIFAGDQAFAYAMLSAGSA) form a helical membrane-spanning segment. Topologically, residues 152–185 (ASGVTNLNRTGIRHSPLPNFCKPLRSFCDHVAAS) are extracellular. N-linked (GlcNAc...) asparagine glycosylation is present at Asn159. A helical membrane pass occupies residues 186–206 (IAFTFFSCFLLATSAILDVIW). Residues 207–210 (LSKY) are Cytoplasmic-facing.

It belongs to the Casparian strip membrane proteins (CASP) family. Homodimer and heterodimers.

The protein localises to the cell membrane. The polypeptide is CASP-like protein 3A1 (Vitis vinifera (Grape)).